A 429-amino-acid chain; its full sequence is Adenylosuccinate synthetase (429 aa).

GTP contacts are provided by residues 12–18 (GDEGKGK) and 40–42 (GHT). The Proton acceptor role is filled by Asp13. The Mg(2+) site is built by Asp13 and Gly40. IMP-binding positions include 13–16 (DEGK), 38–41 (NAGH), Thr128, Arg142, Gln223, Thr238, and Arg302. His41 functions as the Proton donor in the catalytic mechanism. Residue 298–304 (TVTKRPR) coordinates substrate. GTP is bound by residues Arg304, 330–332 (CLD), and 412–414 (SVG).

This sequence belongs to the adenylosuccinate synthetase family. As to quaternary structure, homodimer. The cofactor is Mg(2+).

The protein localises to the cytoplasm. It carries out the reaction IMP + L-aspartate + GTP = N(6)-(1,2-dicarboxyethyl)-AMP + GDP + phosphate + 2 H(+). It participates in purine metabolism; AMP biosynthesis via de novo pathway; AMP from IMP: step 1/2. Plays an important role in the de novo pathway of purine nucleotide biosynthesis. Catalyzes the first committed step in the biosynthesis of AMP from IMP. The polypeptide is Adenylosuccinate synthetase (Lactiplantibacillus plantarum (strain ATCC BAA-793 / NCIMB 8826 / WCFS1) (Lactobacillus plantarum)).